The sequence spans 87 residues: Large ribosomal subunit protein bL27 (87 aa).

The disordered stretch occupies residues 1–21; the sequence is MAHKKGGGSTRNGRDSASKRL.

This sequence belongs to the bacterial ribosomal protein bL27 family.

This Amoebophilus asiaticus (strain 5a2) protein is Large ribosomal subunit protein bL27.